Consider the following 348-residue polypeptide: Protein RecA (348 aa).

66–73 (GPESSGKT) provides a ligand contact to ATP.

It belongs to the RecA family.

The protein resides in the cytoplasm. Its function is as follows. Can catalyze the hydrolysis of ATP in the presence of single-stranded DNA, the ATP-dependent uptake of single-stranded DNA by duplex DNA, and the ATP-dependent hybridization of homologous single-stranded DNAs. It interacts with LexA causing its activation and leading to its autocatalytic cleavage. The sequence is that of Protein RecA from Neisseria gonorrhoeae (strain NCCP11945).